Here is a 315-residue protein sequence, read N- to C-terminus: DNA-directed RNA polymerase subunit alpha (315 aa).

Positions 1 to 228 (MAQFQIECVE…DLFNPLKDIS (228 aa)) are alpha N-terminal domain (alpha-NTD). Positions 243–315 (TAQIPIEELQ…LPQERSSKHN (73 aa)) are alpha C-terminal domain (alpha-CTD).

The protein belongs to the RNA polymerase alpha chain family. Homodimer. In cyanobacteria the RNAP catalytic core is composed of 2 alpha, 1 beta, 1 beta', 1 gamma and 1 omega subunit. When a sigma factor is associated with the core the holoenzyme is formed, which can initiate transcription.

It catalyses the reaction RNA(n) + a ribonucleoside 5'-triphosphate = RNA(n+1) + diphosphate. DNA-dependent RNA polymerase catalyzes the transcription of DNA into RNA using the four ribonucleoside triphosphates as substrates. The chain is DNA-directed RNA polymerase subunit alpha from Nostoc sp. (strain PCC 7120 / SAG 25.82 / UTEX 2576).